A 412-amino-acid polypeptide reads, in one-letter code: Phosphoglycerate kinase (412 aa).

Residues Val20, Asp21, Phe22, Asn23, Gln35, Arg36, Ser59, His60, Gly62, Arg63, Leu118, Arg119, His166, and Arg167 each coordinate (2R)-3-phosphoglycerate. Position 210 (Gly210) interacts with ADP. CDP is bound at residue Gly210. AMP is bound by residues Ala211 and Lys212. Ala211 contributes to the ATP binding site. Ala211 contributes to the Mg(2+) binding site. The Mg(2+) site is built by Ala214 and Asp215. Position 215 (Asp215) interacts with CDP. Lys216 provides a ligand contact to AMP. Residue Lys216 coordinates ATP. Gly234 is an ADP binding site. Gly234 provides a ligand contact to CDP. AMP is bound by residues Gly235 and Gly308. Residues Gly235 and Gly308 each contribute to the ATP site. The CDP site is built by Gly333 and Phe338. Phe338 lines the ADP pocket. Glu339 contributes to the AMP binding site. The ATP site is built by Glu339, Asp370, and Thr371. Mg(2+) is bound at residue Asp370.

The protein belongs to the phosphoglycerate kinase family. As to quaternary structure, monomer. Mg(2+) serves as cofactor.

The protein localises to the cytoplasm. The enzyme catalyses (2R)-3-phosphoglycerate + ATP = (2R)-3-phospho-glyceroyl phosphate + ADP. It functions in the pathway carbohydrate degradation; glycolysis; pyruvate from D-glyceraldehyde 3-phosphate: step 2/5. In terms of biological role, catalyzes one of the two ATP producing reactions in the glycolytic pathway via the reversible conversion of 1,3-diphosphoglycerate to 3-phosphoglycerate. In addition to its role as a glycolytic enzyme, it seems that PGK-1 acts as a polymerase alpha cofactor protein (primer recognition protein). May play a role in sperm motility. This Aplysia californica (California sea hare) protein is Phosphoglycerate kinase (PGK).